The primary structure comprises 251 residues: Ribosomal RNA small subunit methyltransferase J (251 aa).

S-adenosyl-L-methionine-binding positions include 100 to 101 (RD), 116 to 117 (ER), and aspartate 170.

This sequence belongs to the methyltransferase superfamily. RsmJ family.

The protein localises to the cytoplasm. The catalysed reaction is guanosine(1516) in 16S rRNA + S-adenosyl-L-methionine = N(2)-methylguanosine(1516) in 16S rRNA + S-adenosyl-L-homocysteine + H(+). Specifically methylates the guanosine in position 1516 of 16S rRNA. The polypeptide is Ribosomal RNA small subunit methyltransferase J (Actinobacillus pleuropneumoniae serotype 3 (strain JL03)).